Here is a 199-residue protein sequence, read N- to C-terminus: Lipid A acyltransferase PagP (199 aa).

The first 25 residues, 1–25 (MNYKDIINACILSGVFLLHSPSALA), serve as a signal peptide directing secretion. Residues H74, D117, and S118 contribute to the active site.

The protein belongs to the lipid A palmitoyltransferase family. In terms of assembly, homodimer.

It is found in the cell outer membrane. It carries out the reaction a lipid A + a 1,2-diacyl-sn-glycero-3-phosphocholine = a hepta-acyl lipid A + a 2-acyl-sn-glycero-3-phosphocholine. The enzyme catalyses a lipid IVA + a 1,2-diacyl-sn-glycero-3-phosphocholine = a lipid IVB + a 2-acyl-sn-glycero-3-phosphocholine. It catalyses the reaction a lipid IIA + a 1,2-diacyl-sn-glycero-3-phosphocholine = a lipid IIB + a 2-acyl-sn-glycero-3-phosphocholine. Transfers a fatty acid residue from the sn-1 position of a phospholipid to the N-linked hydroxyfatty acid chain on the proximal unit of lipid A or its precursors. This chain is Lipid A acyltransferase PagP, found in Yersinia pestis bv. Antiqua (strain Antiqua).